The following is a 509-amino-acid chain: MQSWSRVYRSLAKKGHFNRISHGLQGVSSVPLRTYADQPIEADVTVIGSGPGGYVAAIKSAQLGFKTVCIEKNETLGGTCLNVGCIPSKALLNNSHYYHMAHGKDFASRGIEIPEVRLNLEKMMEQKHSAVKALTGGIAHLFKQNKVVHVNGFGKITGKNQVTATKADGSTQVIDTKNILVATGSEVTPFPGITIDEDTIVSSTGALSLKKVPEKLVVIGAGVIGVELGSVWQRLGADVTAVEFLGHVGGIGIDMEISKNFQRILQRQGFKFKLNTKVTGATKKSDGKIDVSVEAASGGKAEVITCDVLLVCIGRRPFTQNLGLEELGIELDPKGRIPVNNRFQTKIPNIYAIGDVVAGPMLAHKAEDEGIICVEGMAGGAVHIDYNCVPSVIYTHPEVAWVGKSEEQLKEEGIEFKIGKFPFAANSRAKTNADTDGMVKILGHKSTDRVLGAHILGPGAGEMVNEAALALEYGASCEDIARVCHAHPTLSEAFREANLAAAFGKPINF.

The N-terminal 35 residues, 1 to 35, are a transit peptide targeting the mitochondrion; it reads MQSWSRVYRSLAKKGHFNRISHGLQGVSSVPLRTY. K66 is modified (N6-acetyllysine; alternate). An N6-succinyllysine; alternate modification is found at K66. FAD contacts are provided by residues 71–80 and K89; that span reads EKNETLGGTC. Cysteines 80 and 85 form a disulfide. An N6-acetyllysine; alternate mark is found at K104, K122, K132, and K143. An N6-succinyllysine; alternate mark is found at K104, K122, K132, and K143. G154 contacts FAD. 2 positions are modified to N6-succinyllysine: K159 and K166. 183–185 contacts FAD; sequence TGS. NAD(+)-binding positions include 220-227 and E243; that span reads GAGVIGVE. N6-succinyllysine is present on residues K273 and K277. V278 serves as a coordination point for NAD(+). Phosphoserine occurs at positions 285 and 297. G314 contacts NAD(+). K334 is modified (N6-acetyllysine; alternate). K334 bears the N6-succinyllysine; alternate mark. At K346 the chain carries N6-acetyllysine. FAD is bound by residues D355 and 361-364; that span reads MLAH. At K410 the chain carries N6-acetyllysine; alternate. K410 carries the N6-succinyllysine; alternate modification. Residues K417 and K420 each carry the N6-acetyllysine modification. K430 is subject to N6-succinyllysine. The active-site Proton acceptor is H487. K505 bears the N6-acetyllysine; alternate mark. Position 505 is an N6-succinyllysine; alternate (K505).

The protein belongs to the class-I pyridine nucleotide-disulfide oxidoreductase family. As to quaternary structure, homodimer. Part of the multimeric pyruvate dehydrogenase complex that contains multiple copies of pyruvate dehydrogenase (subunits PDHA (PDHA1 or PDHA2) and PDHB, E1), dihydrolipoamide acetyltransferase (DLAT, E2) and lipoamide dehydrogenase (DLD, E3). These subunits are bound to an inner core composed of about 48 DLAT and 12 PDHX molecules (by non covalent bonds). The 2-oxoglutarate dehydrogenase complex is composed of OGDH (2-oxoglutarate dehydrogenase; E1), DLST (dihydrolipoamide succinyltransferase; E2), DLD (dihydrolipoamide dehydrogenase; E3) and the assembly factor KGD4. It contains multiple copies of the three enzymatic components (E1, E2 and E3). In the nucleus, the 2-oxoglutarate dehydrogenase complex associates with KAT2A. Interacts with PDHX. It depends on FAD as a cofactor. Post-translationally, tyrosine phosphorylated. Expressed in liver (at protein level).

The protein resides in the mitochondrion matrix. It is found in the nucleus. The protein localises to the cell projection. It localises to the cilium. Its subcellular location is the flagellum. The protein resides in the cytoplasmic vesicle. It is found in the secretory vesicle. The protein localises to the acrosome. The enzyme catalyses N(6)-[(R)-dihydrolipoyl]-L-lysyl-[protein] + NAD(+) = N(6)-[(R)-lipoyl]-L-lysyl-[protein] + NADH + H(+). Functionally, lipoamide dehydrogenase is a component of the glycine cleavage system as well as an E3 component of three alpha-ketoacid dehydrogenase complexes (pyruvate-, alpha-ketoglutarate-, and branched-chain amino acid-dehydrogenase complex). The 2-oxoglutarate dehydrogenase complex is mainly active in the mitochondrion. A fraction of the 2-oxoglutarate dehydrogenase complex also localizes in the nucleus and is required for lysine succinylation of histones: associates with KAT2A on chromatin and provides succinyl-CoA to histone succinyltransferase KAT2A. In monomeric form may have additional moonlighting function as serine protease. Involved in the hyperactivation of spermatazoa during capacitation and in the spermatazoal acrosome reaction. The sequence is that of Dihydrolipoyl dehydrogenase, mitochondrial (Dld) from Mus musculus (Mouse).